The sequence spans 324 residues: NADH-ubiquinone oxidoreductase chain 1 (324 aa).

The next 8 membrane-spanning stretches (helical) occupy residues 3–23 (LLFM…AVAF), 73–93 (LLFI…WTPF), 106–126 (ILFI…SGWA), 151–171 (ALII…AFAI), 175–195 (FTWF…STLA), 226–246 (LFFL…TIIF), 255–275 (TLTT…FLWV), and 295–315 (FLPL…SLLF).

It belongs to the complex I subunit 1 family.

The protein localises to the mitochondrion inner membrane. It catalyses the reaction a ubiquinone + NADH + 5 H(+)(in) = a ubiquinol + NAD(+) + 4 H(+)(out). Functionally, core subunit of the mitochondrial membrane respiratory chain NADH dehydrogenase (Complex I) that is believed to belong to the minimal assembly required for catalysis. Complex I functions in the transfer of electrons from NADH to the respiratory chain. The immediate electron acceptor for the enzyme is believed to be ubiquinone. The polypeptide is NADH-ubiquinone oxidoreductase chain 1 (MT-ND1) (Aquarana catesbeiana (American bullfrog)).